A 452-amino-acid polypeptide reads, in one-letter code: Bifunctional protein GlmU (452 aa).

Residues 1-226 (MNFSAVILAA…PIEVEGVNDR (226 aa)) form a pyrophosphorylase region. UDP-N-acetyl-alpha-D-glucosamine-binding positions include 8–11 (LAAG), K22, Q73, 78–79 (GT), 100–102 (YGD), G137, E151, N166, and N224. D102 contributes to the Mg(2+) binding site. Residue N224 participates in Mg(2+) binding. Residues 227-247 (AQLARLERAYQAAQAQKLLEQ) are linker. An N-acetyltransferase region spans residues 248–452 (GVMLRDPSRF…IANWQRPTKK (205 aa)). Residues R330 and K348 each coordinate UDP-N-acetyl-alpha-D-glucosamine. The active-site Proton acceptor is H360. The UDP-N-acetyl-alpha-D-glucosamine site is built by Y363 and N374. Acetyl-CoA-binding positions include A377, 383–384 (NY), S402, A420, and R437.

This sequence in the N-terminal section; belongs to the N-acetylglucosamine-1-phosphate uridyltransferase family. It in the C-terminal section; belongs to the transferase hexapeptide repeat family. Homotrimer. It depends on Mg(2+) as a cofactor.

The protein localises to the cytoplasm. It carries out the reaction alpha-D-glucosamine 1-phosphate + acetyl-CoA = N-acetyl-alpha-D-glucosamine 1-phosphate + CoA + H(+). The catalysed reaction is N-acetyl-alpha-D-glucosamine 1-phosphate + UTP + H(+) = UDP-N-acetyl-alpha-D-glucosamine + diphosphate. The protein operates within nucleotide-sugar biosynthesis; UDP-N-acetyl-alpha-D-glucosamine biosynthesis; N-acetyl-alpha-D-glucosamine 1-phosphate from alpha-D-glucosamine 6-phosphate (route II): step 2/2. Its pathway is nucleotide-sugar biosynthesis; UDP-N-acetyl-alpha-D-glucosamine biosynthesis; UDP-N-acetyl-alpha-D-glucosamine from N-acetyl-alpha-D-glucosamine 1-phosphate: step 1/1. It functions in the pathway bacterial outer membrane biogenesis; LPS lipid A biosynthesis. In terms of biological role, catalyzes the last two sequential reactions in the de novo biosynthetic pathway for UDP-N-acetylglucosamine (UDP-GlcNAc). The C-terminal domain catalyzes the transfer of acetyl group from acetyl coenzyme A to glucosamine-1-phosphate (GlcN-1-P) to produce N-acetylglucosamine-1-phosphate (GlcNAc-1-P), which is converted into UDP-GlcNAc by the transfer of uridine 5-monophosphate (from uridine 5-triphosphate), a reaction catalyzed by the N-terminal domain. In Aliivibrio fischeri (strain ATCC 700601 / ES114) (Vibrio fischeri), this protein is Bifunctional protein GlmU.